A 258-amino-acid chain; its full sequence is Pimeloyl-[acyl-carrier protein] methyl ester esterase (258 aa).

The 227-residue stretch at 16-242 folds into the AB hydrolase-1 domain; that stretch reads LVLLHGWGLN…AAHAPFISHP (227 aa). Substrate is bound by residues Trp-22, 82–83, and 143–147; these read SM and FLALQ. Ser-82 serves as the catalytic Nucleophile. Active-site residues include Asp-207 and His-235. Substrate is bound at residue His-235.

The protein belongs to the AB hydrolase superfamily. Carboxylesterase BioH family. Monomer.

The protein localises to the cytoplasm. It carries out the reaction 6-carboxyhexanoyl-[ACP] methyl ester + H2O = 6-carboxyhexanoyl-[ACP] + methanol + H(+). The protein operates within cofactor biosynthesis; biotin biosynthesis. In terms of biological role, the physiological role of BioH is to remove the methyl group introduced by BioC when the pimeloyl moiety is complete. It allows to synthesize pimeloyl-ACP via the fatty acid synthetic pathway through the hydrolysis of the ester bonds of pimeloyl-ACP esters. The chain is Pimeloyl-[acyl-carrier protein] methyl ester esterase from Yersinia pseudotuberculosis serotype O:1b (strain IP 31758).